A 621-amino-acid polypeptide reads, in one-letter code: Chaperone protein HscA homolog (621 aa).

This sequence belongs to the heat shock protein 70 family.

Its function is as follows. Chaperone involved in the maturation of iron-sulfur cluster-containing proteins. Has a low intrinsic ATPase activity which is markedly stimulated by HscB. The polypeptide is Chaperone protein HscA homolog (Cupriavidus necator (strain ATCC 17699 / DSM 428 / KCTC 22496 / NCIMB 10442 / H16 / Stanier 337) (Ralstonia eutropha)).